The chain runs to 468 residues: Ribosomal lysine N-methyltransferase 4 (468 aa).

Residues 22-302 (EKIGLNDYRH…KGEQLWNTYG (281 aa)) form the SET domain. Residues 188–225 (ISNENEKSAAETSIKEDKNGDAAKKNEGSANQDDEKLH) form a disordered region. Residue Tyr-301 participates in S-adenosyl-L-methionine binding.

The protein belongs to the class V-like SAM-binding methyltransferase superfamily. Histone-lysine methyltransferase family. SETD6 subfamily.

The protein localises to the nucleus. S-adenosyl-L-methionine-dependent protein-lysine N-methyltransferase that monomethylates 60S ribosomal protein L42 (rpl42) at 'Lys-55'. In Schizosaccharomyces pombe (strain 972 / ATCC 24843) (Fission yeast), this protein is Ribosomal lysine N-methyltransferase 4.